Consider the following 547-residue polypeptide: ATP synthase subunit alpha (547 aa).

Gly172–Thr179 provides a ligand contact to ATP.

Belongs to the ATPase alpha/beta chains family. As to quaternary structure, F-type ATPases have 2 components, CF(1) - the catalytic core - and CF(0) - the membrane proton channel. CF(1) has five subunits: alpha(3), beta(3), gamma(1), delta(1), epsilon(1). CF(0) has three main subunits: a(1), b(2) and c(9-12). The alpha and beta chains form an alternating ring which encloses part of the gamma chain. CF(1) is attached to CF(0) by a central stalk formed by the gamma and epsilon chains, while a peripheral stalk is formed by the delta and b chains.

The protein localises to the cell membrane. It catalyses the reaction ATP + H2O + 4 H(+)(in) = ADP + phosphate + 5 H(+)(out). Produces ATP from ADP in the presence of a proton gradient across the membrane. The alpha chain is a regulatory subunit. The sequence is that of ATP synthase subunit alpha from Corynebacterium glutamicum (strain R).